Here is a 272-residue protein sequence, read N- to C-terminus: Putative esterase/lipase 3 (272 aa).

Residue His34 is part of the active site. Ser100 acts as the Charge relay system in catalysis.

It belongs to the lipase/esterase LIP3/BchO family.

The chain is Putative esterase/lipase 3 from Mycoplasma pneumoniae (strain ATCC 29342 / M129 / Subtype 1) (Mycoplasmoides pneumoniae).